The chain runs to 29 residues: Glucagon (29 aa).

S2 is subject to Phosphoserine.

This sequence belongs to the glucagon family.

The protein resides in the secreted. Its function is as follows. Glucagon plays a key role in glucose metabolism and homeostasis. Regulates blood glucose by increasing gluconeogenesis and decreasing glycolysis. The chain is Glucagon (GCG) from Oryctolagus cuniculus (Rabbit).